We begin with the raw amino-acid sequence, 81 residues long: Sulfur carrier protein TusA (81 aa).

The active-site Cysteine persulfide intermediate is Cys-19.

It belongs to the sulfur carrier protein TusA family.

It localises to the cytoplasm. Functionally, sulfur carrier protein which probably makes part of a sulfur-relay system. The sequence is that of Sulfur carrier protein TusA from Shewanella sp. (strain MR-4).